Consider the following 196-residue polypeptide: uncharacterized protein (196 aa).

The helical transmembrane segment at 22-42 threads the bilayer; it reads MIIIPMALLVFILIIGSFFAI.

The protein resides in the cell membrane. This is an uncharacterized protein from Lactobacillus acidophilus (strain ATCC 700396 / NCK56 / N2 / NCFM).